The chain runs to 49 residues: DNA-directed RNA polymerase subunit Rpo12 (49 aa).

Residues cysteine 11, cysteine 27, and cysteine 30 each coordinate Zn(2+).

It belongs to the archaeal Rpo12/eukaryotic RPC10 RNA polymerase subunit family. In terms of assembly, part of the RNA polymerase complex. Zn(2+) is required as a cofactor.

It localises to the cytoplasm. It carries out the reaction RNA(n) + a ribonucleoside 5'-triphosphate = RNA(n+1) + diphosphate. Its function is as follows. DNA-dependent RNA polymerase (RNAP) catalyzes the transcription of DNA into RNA using the four ribonucleoside triphosphates as substrates. The chain is DNA-directed RNA polymerase subunit Rpo12 from Pyrococcus abyssi (strain GE5 / Orsay).